We begin with the raw amino-acid sequence, 469 residues long: Calcium-binding mitochondrial carrier protein SCaMC-2 (469 aa).

At 1-189 (MLCLCLYVPL…ERQTGMWWRH (189 aa)) the chain is on the mitochondrial intermembrane side. 3 consecutive EF-hand domains span residues 47–80 (TYRQ…QDHE), 78–113 (DHEK…LGVK), and 114–149 (ISEQ…HPVE). Ca(2+) is bound by residues Asp-60, Asp-62, Asp-64, Gln-66, and Glu-71. 3 Solcar repeats span residues 184–270 (GMWW…IKRL), 278–363 (LRIH…LKNA), and 375–463 (PGVF…LKIT). A helical transmembrane segment spans residues 190-207 (LVAGGGAGAVSRTCTAPL). Over 208 to 244 (DRLKVLMQVHASRSNNMCIVGGFTQMIREGGARSLWR) the chain is Mitochondrial matrix. A helical membrane pass occupies residues 245–264 (GNGINVLKIAPESAIKFMAY). Residues 265 to 287 (EQIKRLIGSDQETLRIHERLVAG) are Mitochondrial intermembrane-facing. A helical membrane pass occupies residues 288 to 301 (SLAGAIAQSSIYPM). Residues 302–337 (EVLKTRMALRKTGQYSGMLDCARKILAREGMAAFYK) are Mitochondrial matrix-facing. A helical membrane pass occupies residues 338–357 (GYVPNMLGIIPYAGIDLAVY). Residues 358–380 (ETLKNAWLQRYAVNSADPGVFVL) lie on the Mitochondrial intermembrane side of the membrane. Residues 381–398 (LACGTMSSTCGQLASYPL) form a helical membrane-spanning segment. At 399 to 437 (ALVRTRMQAQASMEGAPEVTMSSLFKQILRTEGAFGLYR) the chain is on the mitochondrial matrix side. A helical transmembrane segment spans residues 438-457 (GLAPNFMKVIPAVSISYVVY). Residues 458–469 (ENLKITLGVQSR) lie on the Mitochondrial intermembrane side of the membrane.

Belongs to the mitochondrial carrier (TC 2.A.29) family.

It is found in the mitochondrion inner membrane. Its function is as follows. Calcium-dependent mitochondrial solute carrier. Mitochondrial solute carriers shuttle metabolites, nucleotides, and cofactors through the mitochondrial inner membrane. May act as a ATP-Mg/Pi exchanger that mediates the transport of Mg-ATP in exchange for phosphate, catalyzing the net uptake or efflux of adenine nucleotides into or from the mitochondria. The sequence is that of Calcium-binding mitochondrial carrier protein SCaMC-2 (SLC25A25) from Bos taurus (Bovine).